The sequence spans 63 residues: MECYKCGVSGCHLKITCSAEEKFCYKWRDKISNERWLGCAKTCTEENTWRVYNSCCTTNLCNP.

Disulfide bonds link cysteine 3–cysteine 24, cysteine 6–cysteine 11, cysteine 17–cysteine 39, cysteine 43–cysteine 55, and cysteine 56–cysteine 61. Proline 63 carries the proline amide modification.

Contains 5 disulfide bonds. Expressed by the venom gland.

The protein resides in the secreted. Functionally, unknown. In vitro, this toxin activates sperm motility when tested on OF1 male mice. This Walterinnesia aegyptia (Desert black snake) protein is Actiflagelin.